Reading from the N-terminus, the 257-residue chain is Protein YIPF5 (257 aa).

Over 1–124 (MSGFENLNTD…KVADGSIMNE (124 aa)) the chain is Cytoplasmic. The interval 75–106 (PASPQPFYGNSFEDEPPLLEELGINFDHIWQK) is interaction with Sec23. Residues 125–145 (TDLAGPMVFCLAFGATLLLAG) traverse the membrane as a helical segment. Position 146 (Lys146) is a topological domain, lumenal. A helical membrane pass occupies residues 147 to 167 (IQFGYVYGISAIGCLGMFCLL). Residues 168–173 (NLMSMT) are Cytoplasmic-facing. A helical membrane pass occupies residues 174–194 (GVSFGCVASVLGYCLLPMILL). Topologically, residues 195–196 (SS) are lumenal. The helical transmembrane segment at 197–217 (FAVIFSLQGMVGIILTAGIIG) threads the bilayer. Topologically, residues 218–236 (WCSFSASKIFISALAMEGQ) are cytoplasmic. A helical transmembrane segment spans residues 237-257 (QLLVAYPCALLYGVFALISVF).

This sequence belongs to the YIP1 family. In terms of assembly, interacts with the COPII coat components Sec23 (SEC23A and/or SEC23B) and Sec24 (SEC24A and/or SEC24B). Interacts with YIF1A. May interact with RAB1A. Interacts with YIPF3 and YIPF4.

It localises to the endoplasmic reticulum membrane. It is found in the golgi apparatus. The protein localises to the cis-Golgi network membrane. Its subcellular location is the cytoplasmic vesicle. The protein resides in the COPII-coated vesicle. Functionally, plays a role in transport between endoplasmic reticulum and Golgi. In pancreatic beta cells, required to transport proinsulin from endoplasmic reticulum into the Golgi. This Macaca fascicularis (Crab-eating macaque) protein is Protein YIPF5 (YIPF5).